The primary structure comprises 2774 residues: Teneurin-2 (2774 aa).

The Teneurin N-terminal domain occupies 1–375; it reads MDVKDRRHRS…KPSKYCSWKC (375 aa). At 1–379 the chain is on the cytoplasmic side; that stretch reads MDVKDRRHRS…YCSWKCAALS (379 aa). Phosphoserine occurs at positions 90 and 124. Residues 111–271 form a disordered region; sequence TGSDADSDTE…HHHSSANSLN (161 aa). The segment covering 141-155 has biased composition (polar residues); it reads SSGLSSRENSALTLT. The residue at position 155 (threonine 155) is a Phosphothreonine. Serine 157 carries the phosphoserine modification. Positions 159 to 168 are enriched in basic and acidic residues; the sequence is NENKSDDENG. The segment covering 176 to 188 has biased composition (low complexity); that stretch reads SPSLLPSAQLPSS. The segment covering 202-211 has biased composition (polar residues); the sequence is DSNTSHQIMD. Positions 229–240 are enriched in low complexity; sequence SGPQQASSSGPP. Residues 380–400 traverse the membrane as a helical segment; sequence AIAAALLLAILLAYFIAMHLL. Residues 401–2774 are Extracellular-facing; it reads GLNWQLQPAD…FLRQNEMGKR (2374 aa). Residues asparagine 443 and asparagine 482 are each glycosylated (N-linked (GlcNAc...) asparagine). 8 consecutive EGF-like domains span residues 575–603, 598–634, 636–668, 669–701, 702–735, 738–766, 769–797, and 808–841; these read DCPRNCHGNGECVSGVCHCFPGFLGADCA, LGADCAKAACPVLCSGNGQYSKGTCQCYSGWKGAECD, PMNQCIDPSCGGHGSCIDGNCVCSAGYKGEHCE, EVDCLDPTCSSHGVCVNGECLCSPGWGGLNCEL, ARVQCPDQCSGHGTYLPDTGLCSCDPNWMGPDCS, VCSVDCGTHGVCIGGACRCEEGWTGAACD, VCHPRCIEHGTCKDGKCECREGWNGEHCT, and DGCPDLCNGNGRCTLGQNSWQCVCQTGWRGPGCN. 22 cysteine pairs are disulfide-bonded: cysteine 576–cysteine 586, cysteine 580–cysteine 591, cysteine 593–cysteine 602, cysteine 611–cysteine 622, cysteine 624–cysteine 633, cysteine 640–cysteine 651, cysteine 645–cysteine 656, cysteine 658–cysteine 667, cysteine 672–cysteine 683, cysteine 677–cysteine 688, cysteine 690–cysteine 699, cysteine 710–cysteine 723, cysteine 725–cysteine 734, cysteine 739–cysteine 749, cysteine 743–cysteine 754, cysteine 756–cysteine 765, cysteine 770–cysteine 780, cysteine 774–cysteine 785, cysteine 787–cysteine 796, cysteine 810–cysteine 820, cysteine 814–cysteine 829, and cysteine 831–cysteine 840. N-linked (GlcNAc...) asparagine glycans are attached at residues asparagine 925, asparagine 948, and asparagine 1267. NHL repeat units lie at residues 1272–1316, 1342–1386, 1401–1452, 1474–1501, and 1530–1573; these read LELR…VKSL, ARCG…NGII, LSCD…IAGR, LESASAIAISHTGVLYITETDEKKINRL, and CYSG…VSKN. One copy of the YD 1 repeat lies at 1583–1602; the sequence is YEAASPGEQELYVFNADGIH. Asparagine 1616 carries N-linked (GlcNAc...) asparagine glycosylation. 3 YD repeats span residues 1619 to 1639, 1682 to 1701, and 1702 to 1724; these read YSTDNDVTELIDNNGNSLKIR, YDGNTGLLATKSDETGWTTF, and YDYDHEGRLTNVTRPTGVVTSLH. 5 N-linked (GlcNAc...) asparagine glycosylation sites follow: asparagine 1712, asparagine 1749, asparagine 1773, asparagine 1807, and asparagine 1892. 18 YD repeats span residues 1895-1914, 1936-1954, 1955-1975, 1982-1999, 2000-2021, 2022-2039, 2042-2062, 2065-2085, 2093-2113, 2119-2136, 2137-2163, 2165-2178, 2179-2202, 2205-2225, 2226-2246, 2248-2268, 2280-2300, and 2302-2322; these read YFFNGRLAGLQRGAMSERTD, YLDKSMVLLLQSQRQYIFE, YDSSDRLLAVTMPSVARHSMS, YIRNIYNPPESNASVIFD, YSDDGRILKTSFLGTGRQVFYK, YGKLSKLSEIVYDSTAVT, YDETTGVLKMVNLQSGGFSCT, YRKIGPLVDKQIYRFSEEGMV, YHDNSFRIASIKPVISETPLP, YDEISGKVEHFGKFGVIY, YDINQIITTAVMTLSKHFDTHGRIKEV, YEMFRSLMYWMTVQ, YDSMGRVIKRELKLGPYANTTKYT, YDGDGQLQSVAVNDRPTWRYS, YDLNGNLHLLNPGNSVRLMPL, YDLRDRITRLGDVQYKIDDDG, YNSKGLLTRAYNKASGWSVQY, and YDGVGRRASYKTNLGHHLQYF. Residue asparagine 1993 is glycosylated (N-linked (GlcNAc...) asparagine). N-linked (GlcNAc...) asparagine glycosylation is present at asparagine 2197. Asparagine 2337 is a glycosylation site (N-linked (GlcNAc...) asparagine). The YD 23 repeat unit spans residues 2348–2389; the sequence is YDLQGHLFAMESSSGEEYYVASDNTGTPLAVFSINGLMIKQL. A glycan (N-linked (GlcNAc...) asparagine) is linked at asparagine 2648.

It belongs to the tenascin family. Teneurin subfamily. In terms of assembly, homodimer; disulfide-linked. Heterodimer with either TENM1 or TENM3. May also form heterodimer with TENM4. Isoform 2 (C-terminal globular domain) interacts with ADGRL1 isoform 2. Post-translationally, derives from the membrane form by proteolytic processing. In terms of processing, derives from the plasma membrane form by proteolytic cleavage and translocates to the nucleus. Homophilic binding of the C-terminal extracellular domain stimulates its proteolytic cleavage and release in the cytoplasmic. Is subjected to rapid degradation by the proteasome pathway. In terms of tissue distribution, highly expressed in heart, followed by brain, liver, kidney and fetal brain and weakly expressed in lung and testis. No expression was detected in skeletal muscle, pancreas, spleen, ovary and fetal liver.

It is found in the cell membrane. The protein resides in the presynaptic cell membrane. It localises to the postsynaptic cell membrane. Its subcellular location is the endoplasmic reticulum. The protein localises to the golgi apparatus. It is found in the synapse. The protein resides in the cell projection. It localises to the dendritic spine. Its subcellular location is the filopodium. The protein localises to the growth cone. It is found in the nucleus. The protein resides in the PML body. Its function is as follows. Involved in neural development, regulating the establishment of proper connectivity within the nervous system. Acts as a ligand of the ADGRL1 and ADGRL3 receptors that are expressed at the surface of adjacent cells. Promotes the formation of filopodia and enlarged growth cone in neuronal cells. Mediates axon guidance and homophilic and heterophilic cell-cell adhesion. May function as a cellular signal transducer. Functionally, acts as a ligand of the ADGRL1 receptor. Mediates axon guidance and heterophilic cell-cell adhesion. Induces gene transcription inhibition. This Homo sapiens (Human) protein is Teneurin-2 (TENM2).